A 754-amino-acid chain; its full sequence is Leucine-rich repeat-containing protein 36 (754 aa).

LRR repeat units lie at residues 51 to 72 (NLRS…QYLC) and 73 to 94 (SLQD…SRLQ). The 40-residue stretch at 107 to 146 (NPVVRKDTDYRLFAVYTLQTLEKLDDRTVREGERKAAKLH) folds into the LRRCT domain. Residues 241 to 255 (REMPSDNHQEDEFRH) are compositionally biased toward basic and acidic residues. The segment at 241 to 270 (REMPSDNHQEDEFRHYSPRQSTVRSPEKMT) is disordered. Residues 600 to 680 (NDMESLKQKL…EKTVAILHES (81 aa)) adopt a coiled-coil conformation. Residues 702 to 734 (YSGKALLPPEKGHHLGRSSPFGKSTLSSSSPVA) form a disordered region. Over residues 722–732 (FGKSTLSSSSP) the composition is skewed to polar residues.

The chain is Leucine-rich repeat-containing protein 36 (LRRC36) from Homo sapiens (Human).